The sequence spans 78 residues: Biotin synthase auxiliary protein (78 aa).

Belongs to the BsaP family. It depends on iron-sulfur cluster as a cofactor.

Its function is as follows. Required for the activity of the biotin synthase BioB. The polypeptide is Biotin synthase auxiliary protein (Mycolicibacterium smegmatis (strain ATCC 700084 / mc(2)155) (Mycobacterium smegmatis)).